The following is a 152-amino-acid chain: uncharacterized protein (152 aa).

Positions 127–152 are disordered; that stretch reads EKEKAERKAEKAKKNKKKSSTKTKKK. Residues 136–152 are compositionally biased toward basic residues; the sequence is EKAKKNKKKSSTKTKKK.

The protein belongs to the mimivirus R546 family.

This is an uncharacterized protein from Sputnik virophage.